A 575-amino-acid polypeptide reads, in one-letter code: MYFEIEKQAIDAISDALDKFEVDNTLENFQVEDEKNFRLEFPPNPDMGDLASTIAFSLAKKLRKAPNLIASEIVEKLEIPEIFEKVEAIGPYVNFFIDYSNFSKKLLEYVGKDYGHLPKADEKIILEHTSANPNGPLHIGHVRNSIFGDSLNRLLKVAGREVETQYYVNDMGRQIAIIVFGITELGLKIEDQEGDKIDHKIGRLYFKANQKLNEDESLVSHVDNLIERYEGGAEPELNKIFEEVVESCLLGIKETLHRININHDDFVWEGQFVRSGEVDDMIKYFDHEGFVSYGDVTYIDLTCFQIEKEFVLRRSDGTSLYSTRDLAYHRYKATQGDVVLDILGSDHKLAAQQINVIFKEILREIPPEVIFYEFITLPSGSMSTRKGVFVSVDELVDEAVKRAADEIKSRNPDLTDEEIKPMAEDIGVGAIRFFIAKLSPEKHLTFKWDEALSFERGCASIQYAHARACKLLKKSGKDVSSLAVSDDWVPNENEKDLIRTIAKFPQVIEDCANKKRIHNITQYCQDLAGAFNKFYKAEQVIGSDVEDTRLVLVDRAKTTLKNALDILGVPAPQKM.

A 'HIGH' region motif is present at residues 131–141 (ANPNGPLHIGH).

Belongs to the class-I aminoacyl-tRNA synthetase family.

It is found in the cytoplasm. The enzyme catalyses tRNA(Arg) + L-arginine + ATP = L-arginyl-tRNA(Arg) + AMP + diphosphate. This chain is Arginine--tRNA ligase, found in Methanobrevibacter smithii (strain ATCC 35061 / DSM 861 / OCM 144 / PS).